A 425-amino-acid chain; its full sequence is MSSILPFTPPIVKRLLGWKKGEQNGQEEKWCEKAVKSLVKKLKKTGQLDELEKAITTQNVNTKCITIPRSLDGRLQVSHRKGLPHVIYCRLWRWPDLHSHHELRAMELCEFAFNMKKDEVCVNPYHYQRVETPVLPPVLVPRHTEIPAEFPPLDDYSHSIPENTNFPAGIEPQSNIPETPPPGYLSEDGETSDHQMNHSMDAGSPNLSPNPMSPAHNNLDLQPVTYCEPAFWCSISYYELNQRVGETFHASQPSMTVDGFTDPSNSERFCLGLLSNVNRNAAVELTRRHIGRGVRLYYIGGEVFAECLSDSAIFVQSPNCNQRYGWHPATVCKIPPGCNLKIFNNQEFAALLAQSVNQGFEAVYQLTRMCTIRMSFVKGWGAEYRRQTVTSTPCWIELHLNGPLQWLDKVLTQMGSPSIRCSSVS.

N-acetylserine is present on Ser2. Phosphothreonine; by CDK2 and CDK4 is present on Thr8. The 127-residue stretch at 10-136 (PIVKRLLGWK…YQRVETPVLP (127 aa)) folds into the MH1 domain. Residue Lys33 forms a Glycyl lysine isopeptide (Lys-Gly) (interchain with G-Cter in ubiquitin) linkage. Cys64 is a binding site for Zn(2+). Residue Lys81 forms a Glycyl lysine isopeptide (Lys-Gly) (interchain with G-Cter in ubiquitin) linkage. The Zn(2+) site is built by Cys109, Cys121, and His126. Residues 137–231 (PVLVPRHTEI…QPVTYCEPAF (95 aa)) are linker. Over residues 165-177 (NFPAGIEPQSNIP) the composition is skewed to polar residues. A disordered region spans residues 165–208 (NFPAGIEPQSNIPETPPPGYLSEDGETSDHQMNHSMDAGSPNLS). At Thr179 the chain carries Phosphothreonine; by CDK2, CDK4 and MAPK. The residue at position 204 (Ser204) is a Phosphoserine; by GSK3 and MAPK. Phosphoserine; by MAPK is present on Ser208. Position 213 is a phosphoserine; by CDK2 and CDK4 (Ser213). Residues 232 to 425 (WCSISYYELN…SPSIRCSSVS (194 aa)) form the MH2 domain. The interval 271–324 (LGLLSNVNRNAAVELTRRHIGRGVRLYYIGGEVFAECLSDSAIFVQSPNCNQRY) is sufficient for interaction with XPO4. Lys378 carries the post-translational modification N6-acetyllysine. Ser416 is modified (phosphoserine). Phosphoserine; by CK1 is present on Ser418. Phosphoserine; by TGFBR1 is present on residues Ser422, Ser423, and Ser425.

The protein belongs to the dwarfin/SMAD family. Monomer; in the absence of TGF-beta. Homooligomer; in the presence of TGF-beta. Heterotrimer; forms a heterotrimer in the presence of TGF-beta consisting of two molecules of C-terminally phosphorylated SMAD2 or SMAD3 and one of SMAD4 to form the transcriptionally active SMAD2/SMAD3-SMAD4 complex. Part of a complex consisting of MAGI2/ARIP1, ACVR2A, ACVR1B and SMAD3. Forms a complex with SMAD2 and TRIM33 upon addition of TGF-beta. Found in a complex composed of SMAD3, RAN and XPO4; within the complex interacts directly with XPO4. Component of the multimeric complex SMAD3/SMAD4/JUN/FOS which forms at the AP1 promoter site; required for synergistic transcriptional activity in response to TGF-beta. Part of a ternary complex composed of SMAD3, ITCH/AIP4 and NEDD9/HEF1; within the complex NEDD9/HEF1 interacts (via N-terminus) with ITCH/AIP4; the complex mediates ubiquitination and proteasomal degradation of NEDD9/HEF1. Interacts with NEDD9; the interaction promotes NEDD9 ubiquitination and proteasomal degradation. Interacts (via an N-terminal domain) with JUN (via its basic DNA binding and leucine zipper domains); this interaction is essential for DNA binding and cooperative transcriptional activity in response to TGF-beta. Identified in a complex that contains at least ZNF451, SMAD2, SMAD3 and SMAD4. Interacts with PPM1A; the interaction dephosphorylates SMAD3 in the C-terminal SXS motif leading to disruption of the SMAD2/3-SMAD4 complex, nuclear export and termination of TGF-beta signaling. Interacts (via MH2 domain) with ZMIZ1 (via SP-RING-type domain); in the TGF-beta signaling pathway increases the activity of the SMAD3/SMAD4 transcriptional complex. Interacts (when phosphorylated) with RNF111; RNF111 acts as an enhancer of the transcriptional responses by mediating ubiquitination and degradation of SMAD3 inhibitors. Interacts (dephosphorylated form via the MH1 and MH2 domains) with RANBP3 (via its C-terminal R domain); the interaction results in the export of dephosphorylated SMAD3 out of the nucleus and termination of the TGF-beta signaling. Interacts (via MH2 domain) with LEMD3; the interaction represses SMAD3 transcriptional activity through preventing the formation of the heteromeric complex with SMAD4 and translocation to the nucleus. Interacts (via the linker region) with EP300 (C-terminal); the interaction promotes SMAD3 acetylation and is enhanced by TGF-beta phosphorylation in the C-terminal of SMAD3. This interaction can be blocked by competitive binding of adenovirus oncoprotein E1A to the same C-terminal site on EP300, which then results in partially inhibited SMAD3/SMAD4 transcriptional activity. Interacts with TGFBR1. Interacts with TGFB1I1. Interacts with PRDM16. Interacts with SNW1. Interacts (via MH2 domain) with ZFYVE9. Interacts with HDAC1. Interacts with TGIF2. Interacts with SKOR1. Interacts with SKOR2. Interacts with DACH1; the interaction inhibits the TGF-beta signaling. Interacts with RBPMS. Interacts (via MH2 domain) with MECOM. Interacts with WWTR1 (via its coiled-coil domain). Interacts with SKI; the interaction represses SMAD3 transcriptional activity. Interacts with MEN1. Interacts with IL1F7. Interaction with CSNK1G2. Interacts with PDPK1 (via PH domain). Interacts with DAB2; the interactions are enhanced upon TGF-beta stimulation. Interacts with USP15. Interacts with PPP5C; the interaction decreases SMAD3 phosphorylation and protein levels. Interacts with LDLRAD4 (via the SMAD interaction motif). Interacts with PMEPA1. Interacts with ZNF451. Interacts with ZFHX3. Interacts weakly with ZNF8. Interacts with STUB1, HSPA1A, HSPA1B, HSP90AA1 and HSP90AB1. Interacts with YAP1 (when phosphorylated at 'Ser-55'). Interacts with MAGI2/ARIP1. Interacts (via MH2 domain) with CITED2 (via C-terminus). Interacts with HGS. Interacts with WWP1. Interacts with TTRAP. Interacts with FOXL2. Interacts with PML. Interacts with NEDD4L; the interaction requires TGF-beta stimulation. Interacts with ZC3H3. Interacts with TGIF. Interacts with CREBBP. Interacts with ATF2. Interacts with NEDD9; the interaction is inhibited by oxidation of NEDD9. Interacts with MTMR4; negatively regulates TGF-beta signaling through SMAD3 dephosphorylation and retention in endosomes. Post-translationally, phosphorylated on serine and threonine residues. Enhanced phosphorylation in the linker region on Thr-179, Ser-204 and Ser-208 on EGF and TGF-beta treatment. Ser-208 is the main site of MAPK-mediated phosphorylation. CDK-mediated phosphorylation occurs in a cell-cycle dependent manner and inhibits both the transcriptional activity and antiproliferative functions of SMAD3. This phosphorylation is inhibited by flavopiridol. Maximum phosphorylation at the G(1)/S junction. Also phosphorylated on serine residues in the C-terminal SXS motif by TGFBR1 and ACVR1. TGFBR1-mediated phosphorylation at these C-terminal sites is required for interaction with SMAD4, nuclear location and transactivational activity, and appears to be a prerequisite for the TGF-beta mediated phosphorylation in the linker region. Dephosphorylated in the C-terminal SXS motif by PPM1A. This dephosphorylation disrupts the interaction with SMAD4, promotes nuclear export and terminates TGF-beta-mediated signaling. Phosphorylation at Ser-418 by CSNK1G2/CK1 promotes ligand-dependent ubiquitination and subsequent proteasome degradation, thus inhibiting SMAD3-mediated TGF-beta responses. Phosphorylated by PDPK1. In terms of processing, acetylation in the nucleus by EP300 in the MH2 domain regulates positively its transcriptional activity and is enhanced by TGF-beta. Poly-ADP-ribosylated by PARP1 and PARP2. ADP-ribosylation negatively regulates SMAD3 transcriptional responses during the course of TGF-beta signaling. Post-translationally, ubiquitinated. Monoubiquitinated, leading to prevent DNA-binding. Deubiquitination by USP15 alleviates inhibition and promotes activation of TGF-beta target genes. Ubiquitinated by RNF111, leading to its degradation: only SMAD3 proteins that are 'in use' are targeted by RNF111, RNF111 playing a key role in activating SMAD3 and regulating its turnover. Undergoes STUB1-mediated ubiquitination and degradation. Highly expressed in the brain and ovary. Detected in the pyramidal cells of the hippocampus, granule cells of the dentate gyrus, granular cells of the cerebral cortex and the granulosa cells of the ovary.

The protein resides in the cytoplasm. It is found in the nucleus. In terms of biological role, receptor-regulated SMAD (R-SMAD) that is an intracellular signal transducer and transcriptional modulator activated by TGF-beta (transforming growth factor) and activin type 1 receptor kinases. Binds the TRE element in the promoter region of many genes that are regulated by TGF-beta and, on formation of the SMAD3/SMAD4 complex, activates transcription. Also can form a SMAD3/SMAD4/JUN/FOS complex at the AP-1/SMAD site to regulate TGF-beta-mediated transcription. Has an inhibitory effect on wound healing probably by modulating both growth and migration of primary keratinocytes and by altering the TGF-mediated chemotaxis of monocytes. This effect on wound healing appears to be hormone-sensitive. Regulator of chondrogenesis and osteogenesis and inhibits early healing of bone fractures. Positively regulates PDPK1 kinase activity by stimulating its dissociation from the 14-3-3 protein YWHAQ which acts as a negative regulator. This Sus scrofa (Pig) protein is Mothers against decapentaplegic homolog 3 (SMAD3).